The following is a 603-amino-acid chain: Probable GMP synthase [glutamine-hydrolyzing] (603 aa).

A Glutamine amidotransferase type-1 domain is found at 6–195 (KIAVVDFGGQ…FIQICGVSKT (190 aa)). Cys81 acts as the Nucleophile in catalysis. Residues His170 and Glu172 contribute to the active site. In terms of domain architecture, GMPS ATP-PPase spans 196–392 (WGIDQFLKEK…LGLESEWVGR (197 aa)). 224 to 230 (SGGVDST) lines the ATP pocket.

Homodimer.

It carries out the reaction XMP + L-glutamine + ATP + H2O = GMP + L-glutamate + AMP + diphosphate + 2 H(+). Its pathway is purine metabolism; GMP biosynthesis; GMP from XMP (L-Gln route): step 1/1. Functionally, catalyzes the synthesis of GMP from XMP. The chain is Probable GMP synthase [glutamine-hydrolyzing] (guaA) from Leptospira interrogans serogroup Icterohaemorrhagiae serovar copenhageni (strain Fiocruz L1-130).